A 2036-amino-acid polypeptide reads, in one-letter code: Bikaverin polyketide synthase bik1 (2036 aa).

The tract at residues 8–242 (YVFGDQSTPV…YPAPIYGPYH (235 aa)) is N-terminal acylcarrier protein transacylase domain (SAT). In terms of domain architecture, Ketosynthase family 3 (KS3) spans 370–801 (ENKIAIIGFS…GGNTSLLLED (432 aa)). Active-site for beta-ketoacyl synthase activity residues include Cys541, His676, and His718. The segment at 908 to 1209 (FLFTGQGAQE…LASLRRKEDH (302 aa)) is acyl/malonyl transferases. Ser997 acts as the For acyl/malonyl transferase activity in catalysis. Residues 1293–1425 (HNVIEQVHGD…CDVAVENPSS (133 aa)) are N-terminal hotdog fold. The PKS/mFAS DH domain maps to 1293 to 1600 (HNVIEQVHGD…FKKVARKVLE (308 aa)). Residues 1295–1599 (VIEQVHGDKR…TFKKVARKVL (305 aa)) are product template (PT) domain. Catalysis depends on His1325, which acts as the Proton acceptor; for dehydratase activity. Residues 1452–1600 (SAHMMRRGLL…FKKVARKVLE (149 aa)) form a C-terminal hotdog fold region. Asp1511 acts as the Proton donor; for dehydratase activity in catalysis. Residues 1628–1654 (VLTPPSTTSHSVGTTSPPEPTESPVGS) are disordered. A compositionally biased stretch (low complexity) spans 1638–1654 (SVGTTSPPEPTESPVGS). The Carrier domain occupies 1653-1730 (GSASGLIQKA…DLKSFLGAND (78 aa)). An O-(pantetheine 4'-phosphoryl)serine modification is found at Ser1690. Positions 1733–1758 (FSSSNSEAESSASSAASTSPSDHGDD) are disordered. Positions 1734 to 1753 (SSSNSEAESSASSAASTSPS) are enriched in low complexity. Ser1857 serves as the catalytic For thioesterase activity.

It functions in the pathway secondary metabolite biosynthesis. In terms of biological role, polyketide synthase; part of the gene cluster that mediates the biosynthesis of bikaverin, a red pigment also considered as a mycotoxin. The first stage is catalyzed by the polyketide synthase bik1, which catalyzes the formation of the intermediate SMA76a also knowm as pre-bikaverin. FAD-dependent monooxygenase bik2 might then be responsible for the oxidation of pre-bikaverin to oxo-pre-bikaverin which is in turn methylated by the O-methyltransferase bik3 to me-oxo-pre-bikaverin. A further cycle of oxydation and methylation by bik2 and bik3 leads to the final product of bikaverin, via a nor-bikaverin intermediate. This chain is Bikaverin polyketide synthase bik1, found in Gibberella fujikuroi (strain CBS 195.34 / IMI 58289 / NRRL A-6831) (Bakanae and foot rot disease fungus).